Consider the following 101-residue polypeptide: Small ribosomal subunit protein uS14 (101 aa).

It belongs to the universal ribosomal protein uS14 family. In terms of assembly, part of the 30S ribosomal subunit. Contacts proteins S3 and S10.

Binds 16S rRNA, required for the assembly of 30S particles and may also be responsible for determining the conformation of the 16S rRNA at the A site. The protein is Small ribosomal subunit protein uS14 of Alteromonas mediterranea (strain DSM 17117 / CIP 110805 / LMG 28347 / Deep ecotype).